Here is a 1252-residue protein sequence, read N- to C-terminus: MSALPGSKLSERVRTVGWQISRPYFCHFFPIRITAPPATCSANKGFPELEHARPCPKRCPGSISQAIHVGKMAAVQVAASLPCEQPREAPRELSLEQNNGFRRLSARLRALQPDDSTVSRMEIHLLFDQLISENYCEGGGVAPEDVSALLVRACQLVPLNQNHLVSKVSQLIHRLLNRLQVIVDEQNLDFLLTYTISAIQQCSPWTHMEILQALAALVYCNGSKCQKHLPDLLGKSGLLMKLSDVTHSDPEVRRAAVHCMANLCLSVPGQPYLEESYQLVCFQAFLTILQSPKSSDMDDITFCMLLQNALKGIQSLLNGGKMRLTQTEHLGALLAVLKKAMFHGLPGLNIEMPAVLYPTPLPQYDGRSPVKPQQPESSAARPSANKKKKYKVKPKKTQQGEKAEEEEPYGEVDAAPGLSMDQANTCVESAWCSSPWGSQGLPVDGGRATGREQVSSPFTISSWKRVSSSESDYSDAEGGMQGKMRSYQAKVRQGALACFLSTIKSIEKKVLYGYWSAFVPDTPELGSPQSVSLMTLTLKDPSPKTRACALQVLSAILEGSKQFLSVAEDTSDHKRAFTPFSVTIASSIRELHRCLLLALVAESSSQTLTQIIKCLANLVSNAPYNRLKLSLLTKVWNHIKPYIRHKDVNVRVSSLTLLGAVVSTHAPLPEVQLLLQQPCSSGRSSSSATPHLSTPDGWKALPAGPSLEEASLSSPKGTAEPCWLIRLCISTVVLPKEDSCSGSDAGSALGSTYEPSPMRLEALQVLAHLARGYFSMAQLYLMELGEVICKCMCEANPSIQLHGVKLLEELGTGLIQQYKPDSSTAPEQRVPVHMVAMFWTAMLNGPLPRALQSTEHPTLQASACDALSSILPEAFSSLPNDKQILCITMLLGLNDSKNHLVKAATSRALGVYVLFPCLRQDVIFVADTANAILMSLQDKSLNVRAKAAWSLGNLTDTLIVNMDTPDPSFQDEFSGLLLLKMLQSAIQASTDKDKVKSNAVRALGNLLHFLQPSHIERPRFAEIIEESIQALISTVVNEAAMKVRWNACYAMGNVFKNPALPLGTAPWTSQAYKALTSVVMSCKNFKVRIRSAAALSVPGRRAQYGSLEQFSQIWSALVTALQRSEDTTDFLEFKYCASLRTHVCQALLHLLGLASASDLPCIQETLTVNGDMIRSYILQFLKSGAGGDDPGAVHSPQERNQMVRVALRHIHSVQALAGDTAKGAIVGFLEDILTVHCDSSGERAVLRGSLDQ.

The HEAT 1 repeat unit spans residues P230–G269. The interval D365–G417 is disordered. Over residues A384–K396 the composition is skewed to basic residues. Phosphoserine is present on residues S471 and S474. HEAT repeat units lie at residues E524–Q562, S586–Y624, and S630–P667. At T689 the chain carries Phosphothreonine. S714 is modified (phosphoserine).

In Rattus norvegicus (Rat), this protein is HEAT repeat-containing protein 6 (Heatr6).